Here is a 344-residue protein sequence, read N- to C-terminus: Beta-1,4-galactosyltransferase 4 (344 aa).

Residues 1–12 (MGCNPPYLLPYR) are Cytoplasmic-facing. A helical; Signal-anchor for type II membrane protein membrane pass occupies residues 13 to 38 (LRLLLFFTLCLTVVGWVTSNYFVDPI). Topologically, residues 39–344 (QVIPKAKVFM…NITVDFWTGV (306 aa)) are lumenal. A disulfide bridge connects residues C77 and C118. UDP-alpha-D-galactose is bound by residues 129 to 133 (PHRNR), 168 to 170 (FNR), and 195 to 196 (VD). The cysteines at positions 189 and 208 are disulfide-linked. D196 contributes to the Mn(2+) binding site. N220 carries N-linked (GlcNAc...) asparagine glycosylation. Positions 224 and 256 each coordinate UDP-alpha-D-galactose. An N-acetyl-D-glucosamine-binding site is contributed by 258 to 261 (GEDD). A Mn(2+)-binding site is contributed by H289. Residue 289-291 (HTR) participates in UDP-alpha-D-galactose binding. R301 is a binding site for N-acetyl-D-glucosamine. An N-linked (GlcNAc...) asparagine glycan is attached at N335.

It belongs to the glycosyltransferase 7 family. The cofactor is Mn(2+).

Its subcellular location is the golgi apparatus. It localises to the golgi stack membrane. It catalyses the reaction N-acetyl-D-glucosamine + UDP-alpha-D-galactose = beta-D-galactosyl-(1-&gt;4)-N-acetyl-D-glucosamine + UDP + H(+). It carries out the reaction a beta-D-GlcNAc-(1-&gt;3)-beta-D-Gal-(1-&gt;4)-beta-D-Glc-(1&lt;-&gt;1)-Cer(d18:1(4E)) + UDP-alpha-D-galactose = a neolactoside nLc4Cer(d18:1(4E)) + UDP + H(+). It functions in the pathway protein modification; protein glycosylation. Functionally, galactose (Gal) transferase involved in the biosynthesis of glycoproteins, proteoglycans, and glycosyphingolipids. Catalyzes the transfer of Gal residue via a beta1-&gt;4 linkage from UDP-Gal to the non-reducing terminal N-acetyl glucosamine 6-O-sulfate (6-O-sulfoGlcNAc) in the linearly growing chain of both N- and O-linked keratan sulfate proteoglycans. Cooperates with B3GNT7 N-acetyl glucosamine transferase and CHST6 and CHST1 sulfotransferases to construct and elongate mono- and disulfated disaccharide units [-&gt;3Galbeta1-&gt;4(6-sulfoGlcNAcbeta)1-&gt;] and [-&gt;3(6-sulfoGalbeta)1-&gt;4(6-sulfoGlcNAcbeta)1-&gt;] within keratan sulfate polymer. This chain is Beta-1,4-galactosyltransferase 4 (B4GALT4), found in Cricetulus griseus (Chinese hamster).